Consider the following 69-residue polypeptide: Large ribosomal subunit protein uL29 (69 aa).

The protein belongs to the universal ribosomal protein uL29 family.

This Staphylococcus haemolyticus (strain JCSC1435) protein is Large ribosomal subunit protein uL29.